The sequence spans 126 residues: MGKKSLVKLTRKTNPRIVSLILTLKDRANVDSAPIWKDIAKRLEAPSRNYAAVNISKINRHTAENDVLLVPGKVLGAGLLDHPVTVAAVTFSESAVEKITEAGGKCLSVEEIMEANPKGSGIRIFR.

The protein belongs to the eukaryotic ribosomal protein eL18 family.

This chain is Large ribosomal subunit protein eL18, found in Methanosarcina mazei (strain ATCC BAA-159 / DSM 3647 / Goe1 / Go1 / JCM 11833 / OCM 88) (Methanosarcina frisia).